A 61-amino-acid chain; its full sequence is Photosystem II reaction center protein K (61 aa).

The propeptide occupies 1-24 (MLNIFSLICICLNSALHSSSFFFA). Residues 32 to 52 (FFNPIVDFMPVIPVLFFLLAL) traverse the membrane as a helical segment.

The protein belongs to the PsbK family. As to quaternary structure, PSII is composed of 1 copy each of membrane proteins PsbA, PsbB, PsbC, PsbD, PsbE, PsbF, PsbH, PsbI, PsbJ, PsbK, PsbL, PsbM, PsbT, PsbX, PsbY, PsbZ, Psb30/Ycf12, at least 3 peripheral proteins of the oxygen-evolving complex and a large number of cofactors. It forms dimeric complexes.

It is found in the plastid. It localises to the chloroplast thylakoid membrane. Functionally, one of the components of the core complex of photosystem II (PSII). PSII is a light-driven water:plastoquinone oxidoreductase that uses light energy to abstract electrons from H(2)O, generating O(2) and a proton gradient subsequently used for ATP formation. It consists of a core antenna complex that captures photons, and an electron transfer chain that converts photonic excitation into a charge separation. The protein is Photosystem II reaction center protein K of Drimys granadensis.